Reading from the N-terminus, the 226-residue chain is ATP synthase F(0) complex subunit a (226 aa).

Transmembrane regions (helical) follow at residues 6 to 26, 68 to 88, 97 to 117, 138 to 158, 164 to 184, and 189 to 209; these read FASF…IIMF, WTLM…LGLL, QLSM…ITGF, IPML…ALAV, ITAG…LMNI, and ATIT…VALI.

Belongs to the ATPase A chain family. In terms of assembly, component of the ATP synthase complex composed at least of ATP5F1A/subunit alpha, ATP5F1B/subunit beta, ATP5MC1/subunit c (homooctomer), MT-ATP6/subunit a, MT-ATP8/subunit 8, ATP5ME/subunit e, ATP5MF/subunit f, ATP5MG/subunit g, ATP5MK/subunit k, ATP5MJ/subunit j, ATP5F1C/subunit gamma, ATP5F1D/subunit delta, ATP5F1E/subunit epsilon, ATP5PF/subunit F6, ATP5PB/subunit b, ATP5PD/subunit d, ATP5PO/subunit OSCP. ATP synthase complex consists of a soluble F(1) head domain (subunits alpha(3) and beta(3)) - the catalytic core - and a membrane F(0) domain - the membrane proton channel (subunits c, a, 8, e, f, g, k and j). These two domains are linked by a central stalk (subunits gamma, delta, and epsilon) rotating inside the F1 region and a stationary peripheral stalk (subunits F6, b, d, and OSCP). Interacts with DNAJC30; interaction is direct.

The protein resides in the mitochondrion inner membrane. It catalyses the reaction H(+)(in) = H(+)(out). In terms of biological role, subunit a, of the mitochondrial membrane ATP synthase complex (F(1)F(0) ATP synthase or Complex V) that produces ATP from ADP in the presence of a proton gradient across the membrane which is generated by electron transport complexes of the respiratory chain. ATP synthase complex consist of a soluble F(1) head domain - the catalytic core - and a membrane F(1) domain - the membrane proton channel. These two domains are linked by a central stalk rotating inside the F(1) region and a stationary peripheral stalk. During catalysis, ATP synthesis in the catalytic domain of F(1) is coupled via a rotary mechanism of the central stalk subunits to proton translocation. With the subunit c (ATP5MC1), forms the proton-conducting channel in the F(0) domain, that contains two crucial half-channels (inlet and outlet) that facilitate proton movement from the mitochondrial intermembrane space (IMS) into the matrix. Protons are taken up via the inlet half-channel and released through the outlet half-channel, following a Grotthuss mechanism. The polypeptide is ATP synthase F(0) complex subunit a (Mus musculus (Mouse)).